The sequence spans 269 residues: Thymidylate synthase (269 aa).

Residues R21 and 125–126 (RR) each bind dUMP. C145 (nucleophile) is an active-site residue. Residues 171 to 174 (RSGD), N182, and 212 to 214 (HVY) each bind dUMP. D174 provides a ligand contact to (6R)-5,10-methylene-5,6,7,8-tetrahydrofolate. A (6R)-5,10-methylene-5,6,7,8-tetrahydrofolate-binding site is contributed by A268.

The protein belongs to the thymidylate synthase family. Bacterial-type ThyA subfamily. As to quaternary structure, homodimer.

It localises to the cytoplasm. It catalyses the reaction dUMP + (6R)-5,10-methylene-5,6,7,8-tetrahydrofolate = 7,8-dihydrofolate + dTMP. It functions in the pathway pyrimidine metabolism; dTTP biosynthesis. Its function is as follows. Catalyzes the reductive methylation of 2'-deoxyuridine-5'-monophosphate (dUMP) to 2'-deoxythymidine-5'-monophosphate (dTMP) while utilizing 5,10-methylenetetrahydrofolate (mTHF) as the methyl donor and reductant in the reaction, yielding dihydrofolate (DHF) as a by-product. This enzymatic reaction provides an intracellular de novo source of dTMP, an essential precursor for DNA biosynthesis. In Cutibacterium acnes (strain DSM 16379 / KPA171202) (Propionibacterium acnes), this protein is Thymidylate synthase.